The chain runs to 554 residues: (+)-delta-cadinene synthase isozyme XC14 (554 aa).

The segment covering 1-16 (MASQVSQMPSSSPLSS) has biased composition (low complexity). The tract at residues 1–23 (MASQVSQMPSSSPLSSNKDEMRP) is disordered. Residues D307, D311, and D451 each coordinate Mg(2+). Residues 307-311 (DDTYD) carry the DDXXD motif motif.

Belongs to the terpene synthase family. Mg(2+) serves as cofactor.

The enzyme catalyses (2E,6E)-farnesyl diphosphate = (1S,8aR)-delta-cadinene + diphosphate. It functions in the pathway secondary metabolite biosynthesis; terpenoid biosynthesis. Its function is as follows. Responsible for the cyclization of trans,trans-farnesyl diphosphate (FPP) to (+)-delta cadinene. This Gossypium arboreum (Tree cotton) protein is (+)-delta-cadinene synthase isozyme XC14.